We begin with the raw amino-acid sequence, 72 residues long: Translation initiation factor IF-1 (72 aa).

Residues Met-1 to Arg-72 form the S1-like domain.

The protein belongs to the IF-1 family. In terms of assembly, component of the 30S ribosomal translation pre-initiation complex which assembles on the 30S ribosome in the order IF-2 and IF-3, IF-1 and N-formylmethionyl-tRNA(fMet); mRNA recruitment can occur at any time during PIC assembly.

The protein localises to the cytoplasm. Its function is as follows. One of the essential components for the initiation of protein synthesis. Stabilizes the binding of IF-2 and IF-3 on the 30S subunit to which N-formylmethionyl-tRNA(fMet) subsequently binds. Helps modulate mRNA selection, yielding the 30S pre-initiation complex (PIC). Upon addition of the 50S ribosomal subunit IF-1, IF-2 and IF-3 are released leaving the mature 70S translation initiation complex. The sequence is that of Translation initiation factor IF-1 from Shewanella loihica (strain ATCC BAA-1088 / PV-4).